We begin with the raw amino-acid sequence, 600 residues long: Long-chain-fatty-acid--CoA ligase FadD15 (600 aa).

It belongs to the ATP-dependent AMP-binding enzyme family.

The enzyme catalyses a long-chain fatty acid + ATP + CoA = a long-chain fatty acyl-CoA + AMP + diphosphate. The catalysed reaction is dodecanoate + ATP + CoA = dodecanoyl-CoA + AMP + diphosphate. It catalyses the reaction hexadecanoate + ATP + CoA = hexadecanoyl-CoA + AMP + diphosphate. It functions in the pathway lipid metabolism; fatty acid biosynthesis. In terms of biological role, catalyzes the activation of long-chain fatty acids as acyl-coenzyme A (acyl-CoA), which are then transferred to the multifunctional polyketide synthase (PKS) type III for further chain extension. This is Long-chain-fatty-acid--CoA ligase FadD15 (fadD15) from Mycobacterium tuberculosis (strain ATCC 25618 / H37Rv).